We begin with the raw amino-acid sequence, 1009 residues long: Type VII secretion system accessory factor EsaA (1009 aa).

Residues 7–27 form a helical membrane-spanning segment; sequence IYALIVTLIIIIAIVSMIFFV. A compositionally biased stretch (basic and acidic residues) spans 680 to 697; it reads TFAEEPQEPKIDKGKNDE. The tract at residues 680–707 is disordered; it reads TFAEEPQEPKIDKGKNDEFNTMSSNLDK. 5 consecutive transmembrane segments (helical) span residues 822–842, 869–889, 903–923, 928–948, and 979–999; these read ISPT…AYIF, VITS…VGLI, KFIL…TYLL, SIGM…MNNL, and IGLV…LNMF.

It belongs to the EsaA family. Homodimer. Interacts with EssB.

It is found in the cell membrane. In terms of biological role, component of the type VII secretion system (Ess). Provides together with EssB and other components such as EssC and EssE a secretion platform across the cytoplasmic membrane in the host. The protein is Type VII secretion system accessory factor EsaA of Staphylococcus aureus (strain COL).